The following is a 626-amino-acid chain: Phosphomethylpyrimidine synthase (626 aa).

Substrate is bound by residues asparagine 237, methionine 266, tyrosine 295, histidine 331, serine 351–glycine 353, aspartate 392–arginine 395, and glutamate 431. Residue histidine 435 coordinates Zn(2+). Residue tyrosine 458 participates in substrate binding. Position 499 (histidine 499) interacts with Zn(2+). Residues cysteine 579, cysteine 582, and cysteine 587 each contribute to the [4Fe-4S] cluster site.

The protein belongs to the ThiC family. As to quaternary structure, homodimer. It depends on [4Fe-4S] cluster as a cofactor.

It carries out the reaction 5-amino-1-(5-phospho-beta-D-ribosyl)imidazole + S-adenosyl-L-methionine = 4-amino-2-methyl-5-(phosphooxymethyl)pyrimidine + CO + 5'-deoxyadenosine + formate + L-methionine + 3 H(+). Its pathway is cofactor biosynthesis; thiamine diphosphate biosynthesis. Functionally, catalyzes the synthesis of the hydroxymethylpyrimidine phosphate (HMP-P) moiety of thiamine from aminoimidazole ribotide (AIR) in a radical S-adenosyl-L-methionine (SAM)-dependent reaction. This is Phosphomethylpyrimidine synthase from Cupriavidus pinatubonensis (strain JMP 134 / LMG 1197) (Cupriavidus necator (strain JMP 134)).